The primary structure comprises 284 residues: Nucleotide-binding protein VSAL_I0495 (284 aa).

Residue 8 to 15 coordinates ATP; it reads GNSGAGKS. 56–59 serves as a coordination point for GTP; the sequence is DIRN.

It belongs to the RapZ-like family.

Functionally, displays ATPase and GTPase activities. This Aliivibrio salmonicida (strain LFI1238) (Vibrio salmonicida (strain LFI1238)) protein is Nucleotide-binding protein VSAL_I0495.